Here is a 1180-residue protein sequence, read N- to C-terminus: uncharacterized protein (1180 aa).

Disordered regions lie at residues Arg-229–Ile-280, Lys-431–Lys-465, Ser-484–Arg-575, Gly-730–Thr-758, Gly-810–Asp-986, Arg-1045–Met-1109, and Glu-1125–Glu-1152. Acidic residues predominate over residues Gln-269–Ser-279. Positions Lys-431 to Ala-443 are enriched in basic residues. A compositionally biased stretch (polar residues) spans Asp-486–Pro-497. The segment covering Ser-509–Ser-518 has biased composition (basic residues). 3 stretches are compositionally biased toward basic and acidic residues: residues Gly-730–Pro-745, Ser-826–Arg-837, and Thr-846–Lys-856. The span at Lys-872–Gln-889 shows a compositional bias: basic residues. The span at Gln-937–Met-959 shows a compositional bias: polar residues. Basic and acidic residues-rich tracts occupy residues Glu-960–Asp-986, Arg-1045–Glu-1106, and Leu-1127–Glu-1152. Residues Leu-988–Arg-1171 are a coiled coil.

This is an uncharacterized protein from Homo sapiens (Human).